A 112-amino-acid chain; its full sequence is MEASITVSHSFQCHPRDALRALCAALLTSAATSRNSLASSTHAAPVWRWAFSHSAACASLACWVWLMTCRASSASVAMLWASGSICSANSLMPLDFFTLSIAFMVYCLPVFL.

This is an uncharacterized protein from Escherichia coli.